Reading from the N-terminus, the 204-residue chain is Tic20 family protein Ycf60 (204 aa).

4 helical membrane passes run L5 to I25, L87 to I107, I133 to F153, and G159 to I179.

It belongs to the Tic20 family.

The protein resides in the plastid. It localises to the chloroplast membrane. The protein is Tic20 family protein Ycf60 (ycf60) of Gracilaria tenuistipitata var. liui (Red alga).